Consider the following 517-residue polypeptide: Cytochrome P450 monooxygenase cdmJ (517 aa).

A helical transmembrane segment spans residues 15 to 35 (YMWSLTLFALCLSAILMFPFL). Residue Asn-404 is glycosylated (N-linked (GlcNAc...) asparagine). Cys-451 contacts heme.

The protein belongs to the cytochrome P450 family. The cofactor is heme.

Its subcellular location is the membrane. It carries out the reaction 3-hydroxypentacecilide A + NADPH + O2 + H(+) = chrodrimanin F + NADP(+) + H2O. The enzyme catalyses chrodrimanin C + NADPH + O2 + H(+) = chrodrimanin H + NADP(+) + H2O. It catalyses the reaction verruculide A + NADPH + O2 + H(+) = chrodrimanin E + NADP(+) + H2O. The catalysed reaction is chrodrimanin T + NADPH + O2 + H(+) = chrodrimanin A + NADP(+) + H2O. Its pathway is secondary metabolite biosynthesis; terpenoid biosynthesis. Its function is as follows. Cytochrome P450 monooxygenase; part of the gene cluster that mediates the biosynthesis of chrodrimanin B, a meroterpenoid that acts as a potent blocker of insect GABA-gated chloride channels. The first step of the pathway is the biosynthesis of 6-hydroxymellein by the polyketide synthase cdmE. The prenyltransferase cdmH acts as a 6-hydroxymellein 5-farnesyltransferase and produces the hydrophobic metabolite verruculide C. The FAD-dependent monooxygenase cdmI further converts verruculide C into verruculide B. The terpene cyclase cdmG then produced the pentacyclic molecule 3-hydroxypentacecilide A, the backbone structure of chrodrimanin B, via folding the farnesyl moiety of the substrate into the chair-boat conformation. The short-chain dehydrogenase/reductase cdmF functions as the 3-OH dehydrogenase that oxidizes the C-3 hydroxyl group of 3-hydroxypentacecilide A and produces chrodrimanin C, the dehydrogenated product of 3-hydroxypentacecilide A. The cytochrome P450 monooxygenase cdmJ then accepts both 3-hydroxypentacecilide A and chrodrimanin C and functions as a C-7-beta-hydroxylase to produce respectively chrodrimanin H and chrodrimanin F. The dioxygenase cdmA accepts chrodrimanin H to afford chrodrimanin E, which is further transformed to chrodrimanin A by the dioxygenase cdmD. CdmA can also accept chrodrimanin C as substrate to convert it into verruculide A, which is further converted into chrodrimanin T by cdmD. The last step of the biosynthesis is proposed to be performed by the acetyltransferase cdmC which acetylates chrodrimanin A to yield chrodrimanin B. The pathway may also lead to the production of additional shunt products, including chrodrimanins T and U. The chain is Cytochrome P450 monooxygenase cdmJ from Talaromyces verruculosus (Penicillium verruculosum).